Consider the following 551-residue polypeptide: 2,3-bisphosphoglycerate-independent phosphoglycerate mutase (551 aa).

Aspartate 22 and serine 74 together coordinate Mn(2+). Serine 74 serves as the catalytic Phosphoserine intermediate. Substrate is bound by residues histidine 135, 165–166 (RD), arginine 201, arginine 208, and 281–284 (RGDR). Aspartate 319 lines the Mn(2+) pocket. Substrate is bound at residue lysine 356. Aspartate 424, histidine 428, aspartate 465, histidine 466, and histidine 495 together coordinate Mn(2+).

It belongs to the BPG-independent phosphoglycerate mutase family. In terms of assembly, monomer. It depends on Mn(2+) as a cofactor.

The protein resides in the cytoplasm. It carries out the reaction (2R)-2-phosphoglycerate = (2R)-3-phosphoglycerate. It participates in carbohydrate degradation; glycolysis; pyruvate from D-glyceraldehyde 3-phosphate: step 3/5. Its function is as follows. Catalyzes the interconversion of 2-phosphoglycerate (2-PGA) and 3-phosphoglycerate (3-PGA). This is 2,3-bisphosphoglycerate-independent phosphoglycerate mutase from Trypanosoma brucei brucei (strain 927/4 GUTat10.1).